Consider the following 276-residue polypeptide: MNPYNLSYDELEKKAKAIRRKIVVLNANSPAGGHTGADLSQVEILTSLYFRVLNNDPKDLINPERDIYIQSKGHGAGGYYCCLAEAGYIPEDWLPTYQHSDSKLPGHPVKHKTPGVELNTGALGHGLPVAVGLAIAAKKSGSKRKIYVLTGDGELGEGSNWEAALTAAQYKLDNLIIINDKNKLQLAGFTKDILCTDPLDKKWEAFGMEVHECQGNDIRSVVDTLESIQPNGKPHVVIANTTKGAGISFIEGRPEWHHKVPKGDEVELALEELKDE.

This sequence belongs to the transketolase family. Probable heterodimer composed of AptA and AptB. The cofactor is thiamine diphosphate.

The enzyme catalyses apulose 4-phosphate + D-glyceraldehyde 3-phosphate = D-xylulose 5-phosphate + dihydroxyacetone phosphate. It functions in the pathway carbohydrate metabolism. Functionally, involved in catabolism of D-apiose. Catalyzes the transfer of the glycolaldehyde group from apulose-4-phosphate to D-glyceraldehyde 3-phosphate, generating dihydroxyacetone phosphate and D-xylulose-5-phosphate. The protein is Apulose-4-phosphate transketolase subunit A of Actinobacillus succinogenes (strain ATCC 55618 / DSM 22257 / CCUG 43843 / 130Z).